The primary structure comprises 354 residues: Probable N-acetylmuramoyl-L-alanine amidase (354 aa).

Positions 1–39 are cleaved as a signal peptide; that stretch reads MVKVINNFVKVNQYDRPGLKLAAVKGIVMHWTATPGASA. Positions 40 to 152 constitute an N-acetylmuramoyl-L-alanine amidase domain; that stretch reads LNERNYFNGT…YDVTNKGCPT (113 aa).

Belongs to the N-acetylmuramoyl-L-alanine amidase 2 family.

Its subcellular location is the secreted. It carries out the reaction Hydrolyzes the link between N-acetylmuramoyl residues and L-amino acid residues in certain cell-wall glycopeptides.. The polypeptide is Probable N-acetylmuramoyl-L-alanine amidase (Bacillus licheniformis).